A 160-amino-acid chain; its full sequence is Sulfur-rich protein (160 aa).

Helical transmembrane passes span 62–82 (ITMV…TFVL) and 91–111 (FLFL…SVFM).

The protein localises to the membrane. This Chlamydia caviae (strain ATCC VR-813 / DSM 19441 / 03DC25 / GPIC) (Chlamydophila caviae) protein is Sulfur-rich protein (srp).